The sequence spans 383 residues: Succinyl-diaminopimelate desuccinylase (383 aa).

Position 73 (His73) interacts with Zn(2+). Residue Asp75 is part of the active site. Asp107 is a binding site for Zn(2+). Residue Glu141 is the Proton acceptor of the active site. Positions 142, 170, and 356 each coordinate Zn(2+).

This sequence belongs to the peptidase M20A family. DapE subfamily. As to quaternary structure, homodimer. Zn(2+) is required as a cofactor. Requires Co(2+) as cofactor.

The catalysed reaction is N-succinyl-(2S,6S)-2,6-diaminopimelate + H2O = (2S,6S)-2,6-diaminopimelate + succinate. Its pathway is amino-acid biosynthesis; L-lysine biosynthesis via DAP pathway; LL-2,6-diaminopimelate from (S)-tetrahydrodipicolinate (succinylase route): step 3/3. In terms of biological role, catalyzes the hydrolysis of N-succinyl-L,L-diaminopimelic acid (SDAP), forming succinate and LL-2,6-diaminopimelate (DAP), an intermediate involved in the bacterial biosynthesis of lysine and meso-diaminopimelic acid, an essential component of bacterial cell walls. The sequence is that of Succinyl-diaminopimelate desuccinylase from Pseudomonas putida (strain W619).